A 61-amino-acid chain; its full sequence is Metallothionein-2 (61 aa).

The residue at position 1 (Met-1) is an N-acetylmethionine. The beta stretch occupies residues 1-29 (MDPNCSCASDGSCSCAGACKCKQCKCTSC). 18 residues coordinate a divalent metal cation: Cys-5, Cys-7, Cys-13, Cys-15, Cys-19, Cys-21, Cys-24, Cys-26, Cys-29, Cys-33, Cys-34, Cys-36, Cys-37, Cys-41, Cys-44, Cys-48, Cys-50, and Cys-57. The interval 30 to 61 (KKSCCSCCPVGCAKCSQGCICKEASDKCSCCA) is alpha. Ser-58 is modified (phosphoserine). A divalent metal cation contacts are provided by Cys-59 and Cys-60.

This sequence belongs to the metallothionein superfamily. Type 1 family.

In terms of biological role, metallothioneins have a high content of cysteine residues that bind various heavy metals; these proteins are transcriptionally regulated by both heavy metals and glucocorticoids. The polypeptide is Metallothionein-2 (Mt2) (Mus musculus (Mouse)).